A 961-amino-acid chain; its full sequence is Leucine-rich repeat-containing protein egg-6 (961 aa).

The first 18 residues, 1–18 (MRWLTLIAVAHLIAFLSS), serve as a signal peptide directing secretion. The Extracellular portion of the chain corresponds to 19-854 (AEITCPRIPE…EQNERHRNIR (836 aa)). 17 LRR repeats span residues 60-78 (IDELHILNGTDVKIESLPF), 79-101 (NGLRTIAILNSTLQSFSPTAWRH), 103-124 (EATIEHITINGNELKTVPVFGN), 125-148 (LSTLMSMNLNSNQISSIPDKAFNG), 150-172 (SALTQLRLENNAICDFPPKSLDA), 174-197 (KASLVLLDVSGNCLDAIPAQILRN), 199-222 (ANLMYLDLGSNNISEINNFELMNL), 223-245 (PFLRELRVQNNTLRRIHPMAFMN), 247-269 (PQLQYLYLQDNIISTLDGNRLQG), 270-294 (FKNLEVLDVSNNALYALPSLKDLPN), 305-316 (ITKIETLAFSNN), 317-339 (PNLQLISVQNNNIVQISRNSFES), 340-363 (LDKLVVLLVGNNSLAKIERGMFDG), 364-387 (MKNLQQLSIRNNTLTALDASSFAQ), 388-411 (LAHLTTLDLGHNKIHDIEEGTFDK), 413-435 (SKLFWLDLSNNKISGFKTSVFKK), and 437-455 (ISNILLDGNQLICDESFNE). Residues 855 to 875 (IITAIALAFVGAVTVVVIIFF) form a helical membrane-spanning segment. Residues 876–961 (VNYTKKQRRL…PQAVSHRSRH (86 aa)) are Cytoplasmic-facing. Positions 890–943 (VYRSSPSSSGSSGQNAANESGRSSAAPSPIRPPLMNIPKTPNNRTMESTFGQPQ) are disordered. Residues 893–902 (SSPSSSGSSG) show a composition bias toward low complexity. Polar residues predominate over residues 928-943 (KTPNNRTMESTFGQPQ).

In terms of tissue distribution, in L1 larvae, expressed in a subset of epithelial cells including epidermal, vulval and rectal cells and the excretory duct and pore. Also detected in some neurons. Absent from internal epithelia such as the gut and pharyngeal tubes.

The protein localises to the apical cell membrane. Required for apical extracellular matrix organization and epithelial junction maintenance. The protein is Leucine-rich repeat-containing protein egg-6 of Caenorhabditis elegans.